Here is a 91-residue protein sequence, read N- to C-terminus: MSDRLDDDTISDRLPDDWIHDGDAITRTYTFEEYLDGVAFASEVGDLADEAFHHPEITIRYDEVEVRFTDHEAGGVTSQDIELARRTDDRR.

Belongs to the pterin-4-alpha-carbinolamine dehydratase family.

It carries out the reaction (4aS,6R)-4a-hydroxy-L-erythro-5,6,7,8-tetrahydrobiopterin = (6R)-L-erythro-6,7-dihydrobiopterin + H2O. The protein is Putative pterin-4-alpha-carbinolamine dehydratase of Halobacterium salinarum (strain ATCC 29341 / DSM 671 / R1).